We begin with the raw amino-acid sequence, 429 residues long: 3-phosphoshikimate 1-carboxyvinyltransferase (429 aa).

3-phosphoshikimate is bound by residues lysine 11, serine 12, and arginine 16. Lysine 11 lines the phosphoenolpyruvate pocket. Positions 82 and 110 each coordinate phosphoenolpyruvate. Serine 155, glutamine 157, aspartate 302, and lysine 329 together coordinate 3-phosphoshikimate. Glutamine 157 contacts phosphoenolpyruvate. The active-site Proton acceptor is the aspartate 302. Residues arginine 333 and arginine 385 each coordinate phosphoenolpyruvate.

Belongs to the EPSP synthase family. Monomer.

The protein resides in the cytoplasm. The catalysed reaction is 3-phosphoshikimate + phosphoenolpyruvate = 5-O-(1-carboxyvinyl)-3-phosphoshikimate + phosphate. It participates in metabolic intermediate biosynthesis; chorismate biosynthesis; chorismate from D-erythrose 4-phosphate and phosphoenolpyruvate: step 6/7. Its function is as follows. Catalyzes the transfer of the enolpyruvyl moiety of phosphoenolpyruvate (PEP) to the 5-hydroxyl of shikimate-3-phosphate (S3P) to produce enolpyruvyl shikimate-3-phosphate and inorganic phosphate. This Helicobacter pylori (strain ATCC 700392 / 26695) (Campylobacter pylori) protein is 3-phosphoshikimate 1-carboxyvinyltransferase.